The following is a 129-amino-acid chain: Small ribosomal subunit protein uS8mz (129 aa).

This sequence belongs to the universal ribosomal protein uS8 family. As to quaternary structure, component of the mitochondrial ribosome small subunit.

It localises to the mitochondrion. This Arabidopsis thaliana (Mouse-ear cress) protein is Small ribosomal subunit protein uS8mz (RPS15AB).